The primary structure comprises 359 residues: DNA replication and repair protein RecF (359 aa).

An ATP-binding site is contributed by 30-37 (GPNGSGKT).

The protein belongs to the RecF family.

Its subcellular location is the cytoplasm. The RecF protein is involved in DNA metabolism; it is required for DNA replication and normal SOS inducibility. RecF binds preferentially to single-stranded, linear DNA. It also seems to bind ATP. This Aliivibrio salmonicida (strain LFI1238) (Vibrio salmonicida (strain LFI1238)) protein is DNA replication and repair protein RecF.